The following is a 211-amino-acid chain: Arginine exporter protein ArgO (211 aa).

6 helical membrane passes run Met1–Pro21, Leu37–Gly57, Leu68–Leu88, Ile111–Val131, Trp147–Ala167, and Ala179–Ala199.

Belongs to the LysE/ArgO transporter (TC 2.A.75) family.

Its subcellular location is the cell inner membrane. It carries out the reaction L-arginine(in) = L-arginine(out). In terms of biological role, involved in the export of arginine. Important to control the intracellular level of arginine and the correct balance between arginine and lysine. The sequence is that of Arginine exporter protein ArgO from Salmonella paratyphi C (strain RKS4594).